The chain runs to 162 residues: MPDLYAIIRIRGRLDVPPDVDYTLKLLRLHKKFHMVIYPSNQPGLKGMLQKAKDWITWGEINYETLVELLRKRGRTLGNKPLTDEFVDKYLSKYGIYGGIQGLAKALLEGKIKLHKLEVIKPVFRLHPPRGGFKRSTKRPFNDGGELGYRGKSINELIKRML.

Belongs to the universal ribosomal protein uL30 family. In terms of assembly, part of the 50S ribosomal subunit.

This is Large ribosomal subunit protein uL30 from Staphylothermus marinus (strain ATCC 43588 / DSM 3639 / JCM 9404 / F1).